Reading from the N-terminus, the 382-residue chain is MVEKMNEEVMDSKELQVGDVVTGSVTKVEEKQVLVNVGYKTDGVIPISELANVHIEKASDVVELDQILELKIIKLEENDLVLSKRAVDAEKAWIELQEKFTSGHVFDVTVKDIVNGGLVVDLGVRGFIPASLVEVHYVEDFTDYKGKTLAVKIVELDREKNRVILSHKAVVELELDSKKKEAISSLKEGDVVEGTVQRLTDFGAFVNVGGVDGLVHISQISHERVEQPSEVLEQGQKVKVKVLSVDADTQRISLSIKAAQPGPWENIAGEVKAGDIREGIVKRLVTFGAFVEILPGVEGLVHVSQIANRHVKNPNEVLEMGQEVKVKVLEVHVAEKRISLSIKEAFEENNVTEDYSQYEPNADSATFQLSDIIGEQLKKLKK.

S1 motif domains lie at 18–85, 103–168, 189–257, and 274–343; these read GDVV…LSKR, GHVF…LSHK, GDVV…LSIK, and GDIR…LSIK. Position 244 is a phosphoserine (Ser244).

It belongs to the bacterial ribosomal protein bS1 family.

The chain is Small ribosomal subunit protein bS1 homolog from Bacillus cereus (strain ATCC 10987 / NRS 248).